A 198-amino-acid polypeptide reads, in one-letter code: MSNEENKVTEEELDQIIEEAEKVEAAAQEAEAELEEIGDEKDAKIAQLEAALLSSETKVKDQQDAVLRSKAEVENMRRRTEQEIDKARKYALNKFAEELLPVIDNLERAIQAADAEHEVVKPILEGVELTHKTFVDAVSKFGLKEINPEGEAFNPEFHQAMSIQESPDHESNTVMFVMQKGYELNGRVVRPAMVMVAK.

It belongs to the GrpE family. As to quaternary structure, homodimer.

The protein localises to the cytoplasm. Its function is as follows. Participates actively in the response to hyperosmotic and heat shock by preventing the aggregation of stress-denatured proteins, in association with DnaK and GrpE. It is the nucleotide exchange factor for DnaK and may function as a thermosensor. Unfolded proteins bind initially to DnaJ; upon interaction with the DnaJ-bound protein, DnaK hydrolyzes its bound ATP, resulting in the formation of a stable complex. GrpE releases ADP from DnaK; ATP binding to DnaK triggers the release of the substrate protein, thus completing the reaction cycle. Several rounds of ATP-dependent interactions between DnaJ, DnaK and GrpE are required for fully efficient folding. This Vibrio harveyi (Beneckea harveyi) protein is Protein GrpE.